A 257-amino-acid chain; its full sequence is Imidazole glycerol phosphate synthase subunit HisF (257 aa).

Active-site residues include aspartate 11 and aspartate 130.

This sequence belongs to the HisA/HisF family. Heterodimer of HisH and HisF.

The protein resides in the cytoplasm. It catalyses the reaction 5-[(5-phospho-1-deoxy-D-ribulos-1-ylimino)methylamino]-1-(5-phospho-beta-D-ribosyl)imidazole-4-carboxamide + L-glutamine = D-erythro-1-(imidazol-4-yl)glycerol 3-phosphate + 5-amino-1-(5-phospho-beta-D-ribosyl)imidazole-4-carboxamide + L-glutamate + H(+). The protein operates within amino-acid biosynthesis; L-histidine biosynthesis; L-histidine from 5-phospho-alpha-D-ribose 1-diphosphate: step 5/9. Functionally, IGPS catalyzes the conversion of PRFAR and glutamine to IGP, AICAR and glutamate. The HisF subunit catalyzes the cyclization activity that produces IGP and AICAR from PRFAR using the ammonia provided by the HisH subunit. The protein is Imidazole glycerol phosphate synthase subunit HisF of Trichormus variabilis (strain ATCC 29413 / PCC 7937) (Anabaena variabilis).